Reading from the N-terminus, the 212-residue chain is Ubiquitin-like protein MDY2 (212 aa).

Positions Val74–Pro152 constitute a Ubiquitin-like domain. The tract at residues Pro150–Val177 is disordered.

In terms of assembly, interacts with GET4.

The protein localises to the cytoplasm. It is found in the cytosol. It localises to the nucleus. Its function is as follows. Required for efficient mating. Involved in the production of alpha-factor, the KAR9 and TUB1 location to the shmoo tip and nuclear migration into pheromone-induced shmoos. The chain is Ubiquitin-like protein MDY2 (MDY2) from Saccharomyces cerevisiae (strain ATCC 204508 / S288c) (Baker's yeast).